The primary structure comprises 486 residues: ATP synthase subunit beta (486 aa).

170–177 lines the ATP pocket; that stretch reads GGAGVGKT.

This sequence belongs to the ATPase alpha/beta chains family. In terms of assembly, F-type ATPases have 2 components, CF(1) - the catalytic core - and CF(0) - the membrane proton channel. CF(1) has five subunits: alpha(3), beta(3), gamma(1), delta(1), epsilon(1). CF(0) has three main subunits: a(1), b(2) and c(9-12). The alpha and beta chains form an alternating ring which encloses part of the gamma chain. CF(1) is attached to CF(0) by a central stalk formed by the gamma and epsilon chains, while a peripheral stalk is formed by the delta and b chains.

The protein resides in the cell membrane. The catalysed reaction is ATP + H2O + 4 H(+)(in) = ADP + phosphate + 5 H(+)(out). Functionally, produces ATP from ADP in the presence of a proton gradient across the membrane. The catalytic sites are hosted primarily by the beta subunits. The chain is ATP synthase subunit beta from Clavibacter sepedonicus (Clavibacter michiganensis subsp. sepedonicus).